The primary structure comprises 225 residues: Transcriptional regulatory protein CssR (225 aa).

The Response regulatory domain occupies 4–117; it reads TIYLVEDEDN…ELIIRVQKLL (114 aa). 4-aspartylphosphate is present on D52. The ompR/PhoB-type DNA-binding region spans 129–224; the sequence is KNEIAVSSYR…IYGFGYRMMS (96 aa).

Post-translationally, phosphorylated by CssS.

Its subcellular location is the cytoplasm. Member of the two-component regulatory system CssS/CssR required to control the cellular response to secretion stress. The sequence is that of Transcriptional regulatory protein CssR (cssR) from Bacillus subtilis (strain 168).